The chain runs to 840 residues: Homeobox-leucine zipper protein HOX9 (840 aa).

Disordered stretches follow at residues 1 to 26 and 135 to 160; these read MAAAVAMRSGSGSDGGGGGYDKAGMD and NPSLGNDTSCESNVTTPQNPLRDASN. Over residues 12 to 21 the composition is skewed to gly residues; it reads GSDGGGGGYD. Positions 26-89 form a DNA-binding region, homeobox; sequence DSGKYVRYTP…NRRCRDKQRK (64 aa). Positions 86 to 135 form a coiled coil; it reads KQRKEASRLQAVNRKLTAMNKLLMEENERLQKQVSQLVHENAYMKQQLQN. An START domain is found at 157–385; the sequence is DASNPSGLLT…IAQETSGEVV (229 aa).

This sequence belongs to the HD-ZIP homeobox family. Class III subfamily. As to expression, expressed in seedlings, roots, stems, leaf sheaths and blades and panicles.

It localises to the nucleus. Probable transcription factor. The protein is Homeobox-leucine zipper protein HOX9 (HOX9) of Oryza sativa subsp. japonica (Rice).